Here is a 158-residue protein sequence, read N- to C-terminus: C-type lectin BML-1 (158 aa).

Positions 1-23 (MGHFTFTGLCLLAMFLSLRGAEC) are cleaved as a signal peptide. Disulfide bonds link C26/C37, C54/C154, C61/C156, and C129/C146. The region spanning 33-155 (KNGLCYKVFS…CAALRPFLCQ (123 aa)) is the C-type lectin domain. Residues Q119, D121, and E127 each contribute to the Ca(2+) site. The Galactose-binding motif lies at 119-121 (QPD). The N-linked (GlcNAc...) asparagine glycan is linked to N134. Residues N142 and D143 each contribute to the Ca(2+) site.

This sequence belongs to the true venom lectin family. Homodimer; non-covalently linked. As to expression, expressed by the venom gland.

The protein localises to the secreted. Its function is as follows. Recombinant C-type lectin BML-1 is able to agglutinate erythrocytes. May be a calcium-dependent lectin. This is C-type lectin BML-1 from Bungarus multicinctus (Many-banded krait).